The following is a 193-amino-acid chain: Putative manganese efflux pump MntP (193 aa).

Helical transmembrane passes span 8 to 28, 37 to 57, 61 to 81, 109 to 129, 138 to 158, and 172 to 192; these read LLAIGLAMDCFAVSIASGIIL, LVMALAFGLFQALMPFIGWMF, FSHLIESVDHWIAFAILAFLG, MAIATSIDALAIGISFALLGI, PILIIGFVSFVMSLIGLYFGI, and LWGGIILVAIGLKILIEHLFL.

Belongs to the MntP (TC 9.B.29) family.

It localises to the cell inner membrane. Its function is as follows. Probably functions as a manganese efflux pump. The sequence is that of Putative manganese efflux pump MntP from Bacteroides thetaiotaomicron (strain ATCC 29148 / DSM 2079 / JCM 5827 / CCUG 10774 / NCTC 10582 / VPI-5482 / E50).